The sequence spans 450 residues: Asparagine--tRNA ligase (450 aa).

It belongs to the class-II aminoacyl-tRNA synthetase family. Homodimer.

The protein resides in the cytoplasm. It catalyses the reaction tRNA(Asn) + L-asparagine + ATP = L-asparaginyl-tRNA(Asn) + AMP + diphosphate + H(+). The chain is Asparagine--tRNA ligase from Mycoplasmopsis pulmonis (strain UAB CTIP) (Mycoplasma pulmonis).